A 299-amino-acid polypeptide reads, in one-letter code: Probable lipid kinase YegS-like (299 aa).

Residues 1 to 129 (MSERKALLIL…IDLGEVGGQM (129 aa)) enclose the DAGKc domain. ATP contacts are provided by residues threonine 39, 65–71 (GDGTLRD), and threonine 92. Positions 210, 213, and 215 each coordinate Mg(2+). Glutamate 268 functions as the Proton acceptor in the catalytic mechanism.

It belongs to the diacylglycerol/lipid kinase family. YegS lipid kinase subfamily. Requires Mg(2+) as cofactor. Ca(2+) is required as a cofactor.

The protein localises to the cytoplasm. Its function is as follows. Probably phosphorylates lipids; the in vivo substrate is unknown. The sequence is that of Probable lipid kinase YegS-like from Pseudomonas fluorescens (strain ATCC BAA-477 / NRRL B-23932 / Pf-5).